A 572-amino-acid chain; its full sequence is 2-succinyl-5-enolpyruvyl-6-hydroxy-3-cyclohexene-1-carboxylate synthase (572 aa).

It belongs to the TPP enzyme family. MenD subfamily. As to quaternary structure, homodimer. It depends on Mg(2+) as a cofactor. Mn(2+) is required as a cofactor. Requires thiamine diphosphate as cofactor.

It catalyses the reaction isochorismate + 2-oxoglutarate + H(+) = 5-enolpyruvoyl-6-hydroxy-2-succinyl-cyclohex-3-ene-1-carboxylate + CO2. The protein operates within quinol/quinone metabolism; 1,4-dihydroxy-2-naphthoate biosynthesis; 1,4-dihydroxy-2-naphthoate from chorismate: step 2/7. It functions in the pathway quinol/quinone metabolism; menaquinone biosynthesis. Catalyzes the thiamine diphosphate-dependent decarboxylation of 2-oxoglutarate and the subsequent addition of the resulting succinic semialdehyde-thiamine pyrophosphate anion to isochorismate to yield 2-succinyl-5-enolpyruvyl-6-hydroxy-3-cyclohexene-1-carboxylate (SEPHCHC). This Shewanella amazonensis (strain ATCC BAA-1098 / SB2B) protein is 2-succinyl-5-enolpyruvyl-6-hydroxy-3-cyclohexene-1-carboxylate synthase.